Here is a 228-residue protein sequence, read N- to C-terminus: Nucleolar protein 12 (228 aa).

Residues 1–22 form a disordered region; the sequence is MGKSDRLQQGSKGKGGGKRKHG. A coiled-coil region spans residues 40–103; it reads FHKRKLERRR…AITATTECVQ (64 aa). The span at 126–145 shows a compositional bias: basic and acidic residues; it reads LLEPAQRDGGDGEERERTEA. A disordered region spans residues 126-228; sequence LLEPAQRDGG…QTGRNERSQD (103 aa). Residues 158-170 are compositionally biased toward polar residues; it reads KIQSLTASLNSLV. Basic residues predominate over residues 171 to 180; that stretch reads KQKKRRKQKR. Over residues 181–195 the composition is skewed to basic and acidic residues; the sequence is RQEAKQRSHQSDRKS. The segment covering 204-220 has biased composition (basic residues); sequence NKQKQGKSTKRQRRRQT.

The protein belongs to the RRP17 family.

It localises to the nucleus. The protein resides in the nucleolus. Its function is as follows. May bind to rRNA. The sequence is that of Nucleolar protein 12 (nol12) from Danio rerio (Zebrafish).